A 78-amino-acid polypeptide reads, in one-letter code: Antitoxin VapB2 (78 aa).

The 41-residue stretch at 4–44 (AKIFMNGQSQAVRLPKEFRFSVKEVSVIPLGKGIVLQPLPN) folds into the SpoVT-AbrB domain.

Belongs to the VapB family. In terms of assembly, forms complexes with VapC2; probably VapC2(4):VapB2(2) in the absence of DNA, and VapC2(4):VapB2(4) in the presence of DNA. Crystallizes as heterodimers with stoichiometry VapC2(4):VapB2(4) in the presence of its probable promoter DNA. The heterodimers are in contact via alternative VapC-VapC and VapB-VapB interactions. This subunit contacts DNA.

Functionally, antitoxin component of a type II toxin-antitoxin (TA) system. Upon expression in E.coli or S.cerevisiae neutralizes the effect of cognate toxin VapC2, partially inhibits the RNase activity of VapC2. In Rickettsia felis (strain ATCC VR-1525 / URRWXCal2) (Rickettsia azadi), this protein is Antitoxin VapB2 (vapB2).